The chain runs to 113 residues: Nucleoid-associated protein EUBREC_0329 (113 aa).

Residues 1–12 (MARRGGFPGGMP) show a composition bias toward gly residues. The disordered stretch occupies residues 1–45 (MARRGGFPGGMPGNMNNLMKQAQKMQRQMEEAQKQLEDAEVTAKA). The segment covering 27–37 (RQMEEAQKQLE) has biased composition (basic and acidic residues).

The protein belongs to the YbaB/EbfC family. Homodimer.

The protein localises to the cytoplasm. It is found in the nucleoid. Its function is as follows. Binds to DNA and alters its conformation. May be involved in regulation of gene expression, nucleoid organization and DNA protection. This chain is Nucleoid-associated protein EUBREC_0329, found in Agathobacter rectalis (strain ATCC 33656 / DSM 3377 / JCM 17463 / KCTC 5835 / VPI 0990) (Eubacterium rectale).